Here is a 387-residue protein sequence, read N- to C-terminus: 4-hydroxy-3-methylbut-2-en-1-yl diphosphate synthase (flavodoxin) (387 aa).

[4Fe-4S] cluster is bound by residues cysteine 293, cysteine 296, cysteine 328, and glutamate 335.

This sequence belongs to the IspG family. [4Fe-4S] cluster serves as cofactor.

It carries out the reaction (2E)-4-hydroxy-3-methylbut-2-enyl diphosphate + oxidized [flavodoxin] + H2O + 2 H(+) = 2-C-methyl-D-erythritol 2,4-cyclic diphosphate + reduced [flavodoxin]. The protein operates within isoprenoid biosynthesis; isopentenyl diphosphate biosynthesis via DXP pathway; isopentenyl diphosphate from 1-deoxy-D-xylulose 5-phosphate: step 5/6. Functionally, converts 2C-methyl-D-erythritol 2,4-cyclodiphosphate (ME-2,4cPP) into 1-hydroxy-2-methyl-2-(E)-butenyl 4-diphosphate. The sequence is that of 4-hydroxy-3-methylbut-2-en-1-yl diphosphate synthase (flavodoxin) from Treponema denticola (strain ATCC 35405 / DSM 14222 / CIP 103919 / JCM 8153 / KCTC 15104).